Consider the following 429-residue polypeptide: Lysine-specific demethylase JMJ30 (429 aa).

Residues 272–429 (SSPMEPTYLA…WSNEAESSSS (158 aa)) form the JmjC domain. Residues His326, Asp328, and His405 each contribute to the Fe cation site.

This sequence belongs to the JARID1 histone demethylase family. In terms of assembly, interacts with EFM. Binds to ATXR2, ARF7 and ARF19. Requires Fe(2+) as cofactor. Expressed ubiquitously in vasculatures, roots, rosette leaves, stems, inflorescences and siliques. Mainly present in the root meristem and root differentiation area. Observed at high level in callus.

It localises to the nucleus. The protein localises to the cytoplasm. The protein resides in the endoplasmic reticulum. It catalyses the reaction N(6),N(6),N(6)-trimethyl-L-lysyl(36)-[histone H3] + 2 2-oxoglutarate + 2 O2 = N(6)-methyl-L-lysyl(36)-[histone H3] + 2 formaldehyde + 2 succinate + 2 CO2. It carries out the reaction N(6),N(6),N(6)-trimethyl-L-lysyl(27)-[histone H3] + 2 2-oxoglutarate + 2 O2 = N(6)-methyl-L-lysyl(27)-[histone H3] + 2 formaldehyde + 2 succinate + 2 CO2. The enzyme catalyses N(6),N(6)-dimethyl-L-lysyl(36)-[histone H3] + 2 2-oxoglutarate + 2 O2 = L-lysyl(36)-[histone H3] + 2 formaldehyde + 2 succinate + 2 CO2. Histone demethylase that demethylates 'Lys-36' (H3K36me) of histone H3 with a specific activity for H3K36me3 and H3K36me2. Also active on 'Lys-27' (H3K27me) of histone H3 with a specific activity for H3K27me3 and H3K27me2. No activity on H3K36me1 and H3K27me1. Involved in the control of flowering time by demethylating H3K36me2 at the FT locus and repressing its expression. Acts within the central clock and contributes, in parallel with LUX, to temperature compensation, probably as a component of the evening complex, to maintain circadian period at increasing temperatures; this mechanism involves binding to and regulation of CCA1 and PRR7 promoters. Works in concert with TOC1 to promote the morning-phased clock genes CCA1 and LHY which function as components of the central oscillator. Together with JMJ32, regulates the flowering-repressor FLOWERING LOCUS C (FLC) locus by removing the repressive histone modification H3 lysine 27 trimethylation (H3K27me3), especially at elevated temperatures (e.g. 29 degrees Celsius), thus preventing extreme precocious flowering. JMJ30 and JMJ32 are regulators involved in the integration of abscisic acid (ABA) and brassinosteroids (BR) signaling pathways. Together with JMJ32, controls ABA-mediated growth arrest during the post-germination stage in unfavorable conditions, and responses to ABA during root development, via the removal of repressive histone mark (H3K27me3) from the SnRK2.8 promoter, thus promoting SnRK2.8 expression and subsequent kinase-dependent ABI3 activation. In addition, removes the repressive histone marks (H3K27me3) from the BZR1 locus in response to stress and ABA, thus activating the BR signaling pathway which, in turn, inhibits the ABA signaling pathway. Able to drive tissue identity changes to promote callus formation form somatic cells via a massive genome-wide chromatin remodeling (e.g. H3K9me3 demethylation) leading to the induction of Lateral organ Boundaries-Domain (LBD) genes (e.g. LBD16 and LBD29) that establish root primordia; when in complex with ARF proteins (e.g. ARF7 and ARF19), recruits ATXR2 which promotes the deposition of H3K36me3 at LBD genes promoters, thus ensuring their stable activation during callus formation. In Arabidopsis thaliana (Mouse-ear cress), this protein is Lysine-specific demethylase JMJ30.